The chain runs to 204 residues: MSAIDKLVKASHLIDMNDIIREGNPTLRKVAEEVTFPLSEKEEILGEKMMQFLKHSQDPIMAEKLGLRGGVGLAAPQLDISKRIIAVLVPNVEDAQGNPPKEAYSLQEVMYNPKVVSHSVQDAALSDGEGCLSVDREVPGYVVRHARVTIEYFDKTGEKHRLKLKGYNSIVVQHEIDHIDGIMFYDRINEKNPFAVKEGLLILE.

The Fe cation site is built by C131 and H174. E175 is an active-site residue. H178 is a binding site for Fe cation.

The protein belongs to the polypeptide deformylase family. It depends on Fe(2+) as a cofactor.

The enzyme catalyses N-terminal N-formyl-L-methionyl-[peptide] + H2O = N-terminal L-methionyl-[peptide] + formate. Removes the formyl group from the N-terminal Met of newly synthesized proteins. Requires at least a dipeptide for an efficient rate of reaction. N-terminal L-methionine is a prerequisite for activity but the enzyme has broad specificity at other positions. The polypeptide is Peptide deformylase (Streptococcus agalactiae serotype III (strain NEM316)).